A 271-amino-acid chain; its full sequence is MICFPNAKINLGLNVVSKRPDGYHNIETIFYPIPVRDALEIVASDRTCFTQTGIPVDAPQEKNLVIKALNALKTRYEIPPLEIHLLKAIPFGAGLGGGSADAAFMLKLVNDFCGLDIHPDELEAIASTIGADCPFFIRNTPVFATGTGNQFEPVDLSLKDYYLCLVKPDVAVSTPEAYSMVTPAAPETSLKEIIRLPVSEWKERMVNDFERSVFPRHPVIERIKDTLYEGGALYAAMSGSGSSVFGLFEKPTHFKEQSLFSDCFLWEGQLS.

The active site involves Lys-8. 90–100 (PFGAGLGGGSA) is an ATP binding site. The active site involves Asp-132.

The protein belongs to the GHMP kinase family. IspE subfamily.

It catalyses the reaction 4-CDP-2-C-methyl-D-erythritol + ATP = 4-CDP-2-C-methyl-D-erythritol 2-phosphate + ADP + H(+). Its pathway is isoprenoid biosynthesis; isopentenyl diphosphate biosynthesis via DXP pathway; isopentenyl diphosphate from 1-deoxy-D-xylulose 5-phosphate: step 3/6. Functionally, catalyzes the phosphorylation of the position 2 hydroxy group of 4-diphosphocytidyl-2C-methyl-D-erythritol. This chain is 4-diphosphocytidyl-2-C-methyl-D-erythritol kinase, found in Parabacteroides distasonis (strain ATCC 8503 / DSM 20701 / CIP 104284 / JCM 5825 / NCTC 11152).